The sequence spans 472 residues: F420-non-reducing hydrogenase subunit A (472 aa).

The Ni(2+) site is built by cysteine 61, cysteine 64, cysteine 442, and cysteine 445.

It belongs to the [NiFe]/[NiFeSe] hydrogenase large subunit family. The F420-non-reducing hydrogenase is composed of three subunits; MvhA, MvhD and MvhG. It forms a complex with the heterodisulfide reductase (hdr). Requires Ni(2+) as cofactor.

Functionally, part of a complex that provides reducing equivalents for heterodisulfide reductase. The polypeptide is F420-non-reducing hydrogenase subunit A (mvhA) (Methanothermobacter thermautotrophicus (strain ATCC 29096 / DSM 1053 / JCM 10044 / NBRC 100330 / Delta H) (Methanobacterium thermoautotrophicum)).